A 206-amino-acid polypeptide reads, in one-letter code: Superoxide dismutase [Mn] (206 aa).

Mn(2+) is bound by residues His27, His82, Asp168, and His172.

The protein belongs to the iron/manganese superoxide dismutase family. Mn(2+) serves as cofactor.

The enzyme catalyses 2 superoxide + 2 H(+) = H2O2 + O2. Its function is as follows. Destroys superoxide anion radicals which are normally produced within the cells and which are toxic to biological systems. This chain is Superoxide dismutase [Mn] (sodA), found in Lactococcus lactis subsp. lactis (strain IL1403) (Streptococcus lactis).